A 1657-amino-acid polypeptide reads, in one-letter code: Endoribonuclease Dicer homolog 4 (1657 aa).

Residues 1 to 14 show a composition bias toward low complexity; sequence MGDAAAAAPAAAAA. The disordered stretch occupies residues 1–26; sequence MGDAAAAAPAAAAAGPSSTRGEPKDP. Positions 37 to 214 constitute a Helicase ATP-binding domain; sequence LCKRAVEENI…SHSFTEKGGR (178 aa). Position 50–57 (50–57) interacts with ATP; sequence LGTGCGKT. The DECH box motif lies at 157 to 160; sequence DECH. The Helicase C-terminal domain maps to 400 to 567; sequence NKFSVLINVL…TSNDMFDCLE (168 aa). In terms of domain architecture, Dicer dsRNA-binding fold spans 585 to 675; the sequence is SVSLLHCYCD…LPGPGSRKNK (91 aa). One can recognise a PAZ domain in the interval 856–978; it reads DVSVHASYSS…LPPELCSLKV (123 aa). RNase III domains follow at residues 1010 to 1173 and 1214 to 1358; these read DVML…VEGG and IAGL…LDSG. Mg(2+)-binding residues include glutamate 1252, aspartate 1344, and glutamate 1347. The 68-residue stretch at 1384 to 1451 folds into the DRBM 1 domain; it reads NPMRELRELC…AQETLSKLKN (68 aa). The interval 1525–1556 is disordered; it reads GSGKHDVNNGRNNQPKLATQSGRLPSEATEKS. Over residues 1533–1547 the composition is skewed to polar residues; that stretch reads NGRNNQPKLATQSGR. In terms of domain architecture, DRBM 2 spans 1569 to 1645; the sequence is TARSFLFELC…AQGALWCLKQ (77 aa).

Belongs to the helicase family. Dicer subfamily. In terms of assembly, may interact with ARGONAUTE1 or PINHEAD through their common PAZ domains. Mg(2+) serves as cofactor. The cofactor is Mn(2+). As to expression, expressed in roots, leaf blades, leaf sheaths, shoot apices and spikelets.

Its subcellular location is the nucleus. Involved in the RNA silencing pathway. Cleaves double-stranded RNA to produce small interfering RNAs (siRNAs) which target the selective destruction of complementary RNAs. Required for the production of 21 nucleotide siRNAs. Regulates shoot apical meristem (SAM) initiation and maintenance, leaf polarization and lemma polarity through the trans-acting siRNAS (ta-siRNAs) pathway, which probably modulate the expression of the ARF2, ARF3, ARF4, ARF14 and ARF15 genes. Can process endogenous 21 nucleotide siRNAs derived from an imperfect inverted repeat. May not be involved in microRNAs (miRNAs) production. The protein is Endoribonuclease Dicer homolog 4 (DCL4) of Oryza sativa subsp. japonica (Rice).